The sequence spans 416 residues: Serine hydroxymethyltransferase (416 aa).

(6S)-5,6,7,8-tetrahydrofolate contacts are provided by residues Leu-121 and 125-127 (GHL). Lys-229 carries the N6-(pyridoxal phosphate)lysine modification. 354 to 356 (SPF) is a binding site for (6S)-5,6,7,8-tetrahydrofolate.

It belongs to the SHMT family. In terms of assembly, homodimer. Pyridoxal 5'-phosphate is required as a cofactor.

Its subcellular location is the cytoplasm. It catalyses the reaction (6R)-5,10-methylene-5,6,7,8-tetrahydrofolate + glycine + H2O = (6S)-5,6,7,8-tetrahydrofolate + L-serine. It participates in one-carbon metabolism; tetrahydrofolate interconversion. The protein operates within amino-acid biosynthesis; glycine biosynthesis; glycine from L-serine: step 1/1. Its function is as follows. Catalyzes the reversible interconversion of serine and glycine with tetrahydrofolate (THF) serving as the one-carbon carrier. This reaction serves as the major source of one-carbon groups required for the biosynthesis of purines, thymidylate, methionine, and other important biomolecules. Also exhibits THF-independent aldolase activity toward beta-hydroxyamino acids, producing glycine and aldehydes, via a retro-aldol mechanism. This chain is Serine hydroxymethyltransferase, found in Halorhodospira halophila (strain DSM 244 / SL1) (Ectothiorhodospira halophila (strain DSM 244 / SL1)).